The following is a 207-amino-acid chain: Fibroblast growth factor 18 (207 aa).

The first 27 residues, 1 to 27, serve as a signal peptide directing secretion; that stretch reads MYSAPSACTCLCLHFLLLCFQVQVLAA. An N-linked (GlcNAc...) asparagine glycan is attached at asparagine 39. The cysteines at positions 109 and 127 are disulfide-linked. N-linked (GlcNAc...) asparagine glycosylation is present at asparagine 137. The tract at residues 157 to 183 is disordered; the sequence is GRPRKGPKTRENQQDVHFMKRYPKGQT. The segment covering 164-174 has biased composition (basic and acidic residues); the sequence is KTRENQQDVHF.

It belongs to the heparin-binding growth factors family. Interacts with FGFR3 and FGFR4. As to expression, mainly expressed in the lung. Not detected in brain, heart, liver, kidney and small intestine.

It is found in the secreted. Functionally, plays an important role in the regulation of cell proliferation, cell differentiation and cell migration. Required for normal ossification and bone development. Stimulates hepatic and intestinal proliferation. In Rattus norvegicus (Rat), this protein is Fibroblast growth factor 18 (Fgf18).